Here is a 172-residue protein sequence, read N- to C-terminus: Alpha-crystallin A chain (172 aa).

At M1 the chain carries N-acetylmethionine. Residues 1-63 (MDVTIQHPWF…RTVLDSGISE (63 aa)) form a required for complex formation with BFSP1 and BFSP2 region. Position 6 is a deamidated glutamine; partial (Q6). A Phosphoserine modification is found at S45. Deamidated glutamine; partial is present on Q50. In terms of domain architecture, sHSP spans 52–163 (LFRTVLDSGI…HERAIPVARE (112 aa)). K70 is subject to N6-acetyllysine. Residue Q90 is modified to Deamidated glutamine; partial. The residue at position 99 (K99) is an N6-acetyllysine. Residue H100 participates in Zn(2+) binding. N101 carries the post-translational modification Deamidated asparagine; partial. Residues E102 and H107 each contribute to the Zn(2+) site. The residue at position 122 (S122) is a Phosphoserine. N123 is subject to Deamidated asparagine; partial. Q147 carries the post-translational modification Deamidated glutamine; partial. H154 is a Zn(2+) binding site. S168 is a glycosylation site (O-linked (GlcNAc) serine).

It belongs to the small heat shock protein (HSP20) family. In terms of assembly, heteromer composed of three CRYAA and one CRYAB subunits. Inter-subunit bridging via zinc ions enhances stability, which is crucial as there is no protein turn over in the lens. Can also form homodimers and homotetramers (dimers of dimers) which serve as the building blocks of homooligomers. Within homooligomers, the zinc-binding motif is created from residues of 3 different molecules. His-100 and Glu-102 from one molecule are ligands of the zinc ion, and His-107 and His-154 residues from additional molecules complete the site with tetrahedral coordination geometry. Part of a complex required for lens intermediate filament formation composed of BFSP1, BFSP2 and CRYAA. In terms of processing, acetylation at Lys-70 may increase chaperone activity. Undergoes age-dependent proteolytical cleavage at the C-terminus.

The protein resides in the cytoplasm. The protein localises to the nucleus. In terms of biological role, contributes to the transparency and refractive index of the lens. Acts as a chaperone, preventing aggregation of various proteins under a wide range of stress conditions. Required for the correct formation of lens intermediate filaments as part of a complex composed of BFSP1, BFSP2 and CRYAA. This Macaca mulatta (Rhesus macaque) protein is Alpha-crystallin A chain (CRYAA).